The chain runs to 562 residues: MNINVANLLNGNYILLLFVVLSLGLCLGKLRLGPVQLGNSIGVLVVSLLLGQQHFSINTEALSLGFMLFIFCVGVEAGPNFFSIFFRDGKNYFMLALVMVGSAMLLALGLGKFFGWGIGLTAGMLAGSMTSTPVLVGAGDTLRNTASMGSQLGIEQDHLSLGYALTYLVGLVSLIFGARYLPKLQHQDLPTSAQQIARERGLDADSQRKVYLPVIRAYRVGPELVDWAAGKNLRELGIYRQTGCYIERIRRNGILASPDGDAVLQIGDEIALVGYPDSHSRLNSNFRDGKEVFDRDLLDMRIVTEEIVVKNHNAVGKRLSQLKLTDHGCFLNRIVRSQIEMPIDDSVVLNKGDVLQVSGDARRVKSIADRIGFISIHSQVTDLLAFCAFFVIGIMVGLITIQFSNFTFGIGNAAGLLFAGIMLGFLRANHPTFGYIPQGALNMVKEFGLMVFMAGVGLSAGSTINSSLGEVGIQMLASGLIVSLVPVVICFLFGAYVLKMNRALLFGAMMGARTCAPAMDIISDTARSNIPALGYAGTYAIANVLLTLAGSLIVIIWPELPG.

Transmembrane regions (helical) follow at residues 8 to 28 (LLNGNYILLLFVVLSLGLCLG), 32 to 52 (LGPVQLGNSIGVLVVSLLLGQ), 66 to 86 (FMLFIFCVGVEAGPNFFSIFF), 93 to 113 (FMLALVMVGSAMLLALGLGKF), 116 to 136 (WGIGLTAGMLAGSMTSTPVLV), and 158 to 178 (HLSLGYALTYLVGLVSLIFGA). RCK C-terminal domains follow at residues 202 to 288 (LDAD…NFRD) and 292 to 373 (VFDR…RIGF). Transmembrane regions (helical) follow at residues 383-403 (LLAFCAFFVIGIMVGLITIQF), 406-426 (FTFGIGNAAGLLFAGIMLGFL), 447-467 (FGLMVFMAGVGLSAGSTINSS), 478-498 (SGLIVSLVPVVICFLFGAYVL), and 537-557 (GTYAIANVLLTLAGSLIVIIW).

The protein belongs to the AAE transporter (TC 2.A.81) family. YbjL subfamily.

It is found in the cell membrane. The protein is Putative transport protein PC1_1686 of Pectobacterium carotovorum subsp. carotovorum (strain PC1).